The primary structure comprises 832 residues: Armadillo segment polarity protein (832 aa).

The segment covering 1-20 (MSYQMPQNRTMSHNPYNSSD) has biased composition (polar residues). The tract at residues 1–24 (MSYQMPQNRTMSHNPYNSSDMPMP) is disordered. ARM repeat units lie at residues 146 to 185 (NYQD…QLSK), 188 to 228 (ASRH…NLSH), 230 to 269 (RQGL…NLLL), 272 to 311 (DGSK…ILAY), 356 to 395 (SSNK…NLSD), 397 to 434 (ATKV…NLTC), 483 to 524 (SESA…NLAL), 594 to 634 (ELNR…ELAV), and 636 to 675 (KEVA…KMSE). The segment at 721 to 832 (AYEGLYGQGP…QVAAWYDTDL (112 aa)) is disordered. Residues 767 to 777 (PAGSNPNAGNN) are compositionally biased toward low complexity.

This sequence belongs to the beta-catenin family.

The protein localises to the cytoplasm. Its subcellular location is the cell membrane. It is found in the cell junction. It localises to the adherens junction. Its function is as follows. May associate with CadN and participate in the transmission of developmental information. Can associate with alpha-catenin. Accumulates through wg signaling; arm function in wg signal transduction is required early in development for determination of neuroblast fate. Arm and Abl proteins function cooperatively at adherens junctions in both the CNS and epidermis. The protein is Armadillo segment polarity protein of Aedes aegypti (Yellowfever mosquito).